Reading from the N-terminus, the 2325-residue chain is Otogelin-like protein (2325 aa).

The signal sequence occupies residues 1–22; the sequence is MVPWRALSLPILLVSLRGYVCA. The VWFD 1 domain maps to 112 to 288; it reads GICKTWGQYH…VLTPDDTKCV (177 aa). Disulfide bonds link C114–C248 and C136–C287. The N-linked (GlcNAc...) asparagine glycan is linked to N425. A VWFD 2 domain is found at 472–645; that stretch reads VQCSVVGDSH…HAWRVSSTCF (174 aa). Intrachain disulfides connect C474–C609, C496–C644, and C518–C526. The region spanning 736 to 791 is the TIL 1 domain; that stretch reads CQKGMLYHHCSSLCLRSCTSLSSPEQCKDDCAEGCNCPEGKFYEETLNFCVPIYHC. 2 N-linked (GlcNAc...) asparagine glycosylation sites follow: N817 and N867. A VWFD 3 domain is found at 937–1114; that stretch reads AVCTVYGDRH…DLMEALKPCE (178 aa). Disulfide bonds link C939–C1069, C961–C1113, and C983–C990. N-linked (GlcNAc...) asparagine glycosylation is present at N1280. Positions 1366–1418 constitute a TIL 2 domain; sequence RYEPCATPCFKTCSDPEALACTFLPPVEGCLPYCPKNMILDETTLKCVHPEDC. The region spanning 1506 to 1695 is the VWFD 4 domain; that stretch reads CRCSMLSELS…SWEIEKSFEV (190 aa). 2 disulfide bridges follow: C1508–C1655 and C1549–C1571. N-linked (GlcNAc...) asparagine glycosylation is found at N1576 and N2170. 4 cysteine pairs are disulfide-bonded: C2233–C2289, C2254–C2303, C2265–C2320, and C2269–C2322. Residues 2233–2325 enclose the CTCK domain; it reads CKREERICQK…EPIDCTCQWN (93 aa). An N-linked (GlcNAc...) asparagine glycan is attached at N2296.

It belongs to the otogelin family.

Its subcellular location is the secreted. This Mus musculus (Mouse) protein is Otogelin-like protein (Otogl).